The sequence spans 185 residues: Large ribosomal subunit protein bL25 (185 aa).

This sequence belongs to the bacterial ribosomal protein bL25 family. CTC subfamily. As to quaternary structure, part of the 50S ribosomal subunit; part of the 5S rRNA/L5/L18/L25 subcomplex. Contacts the 5S rRNA. Binds to the 5S rRNA independently of L5 and L18.

This is one of the proteins that binds to the 5S RNA in the ribosome where it forms part of the central protuberance. This chain is Large ribosomal subunit protein bL25, found in Chlamydia trachomatis serovar A (strain ATCC VR-571B / DSM 19440 / HAR-13).